Here is a 195-residue protein sequence, read N- to C-terminus: Cysteine/O-acetylserine efflux protein (195 aa).

At 1–7 (MTPTLLS) the chain is on the periplasmic side. Residues 8 to 28 (AFWTYTLITAMTPGPNNILAL) form a helical membrane-spanning segment. Residues 29-46 (SSATSHGFRQSTRVLAGM) lie on the Cytoplasmic side of the membrane. Residues 47–67 (SLGFLIVMLLCAGISFSLAVI) form a helical membrane-spanning segment. At 68-69 (DP) the chain is on the periplasmic side. A helical membrane pass occupies residues 70 to 90 (AAVHLLSWAGAAYIVWLAWKI). Over 91–104 (ATSPTKEDGLQAKP) the chain is Cytoplasmic. The chain crosses the membrane as a helical span at residues 105–125 (ISFWASFALQFVNVKIILYGV). Over 126 to 141 (TALSTFVLPQTQALSW) the chain is Periplasmic. Residues 142–162 (VVGVSVLLAMIGTFGNVCWAL) traverse the membrane as a helical segment. Over 163-176 (AGHLFQRLFRQYGR) the chain is Cytoplasmic. Residues 177–194 (QLNIVLALLLIYCAVRIF) form a helical membrane-spanning segment. Position 195 (Tyr-195) is a topological domain, periplasmic.

Belongs to the Rht family.

Its subcellular location is the cell inner membrane. It catalyses the reaction O-acetyl-L-serine(in) = O-acetyl-L-serine(out). The enzyme catalyses L-cysteine(in) = L-cysteine(out). Functionally, exporter of O-acetylserine (OAS) and cysteine. This chain is Cysteine/O-acetylserine efflux protein (eamB), found in Escherichia coli O139:H28 (strain E24377A / ETEC).